The primary structure comprises 160 residues: 2-C-methyl-D-erythritol 2,4-cyclodiphosphate synthase (160 aa).

2 residues coordinate a divalent metal cation: D10 and H12. 4-CDP-2-C-methyl-D-erythritol 2-phosphate contacts are provided by residues D10–H12 and H36–S37. H44 contacts a divalent metal cation. 4-CDP-2-C-methyl-D-erythritol 2-phosphate is bound by residues D58–G60, F63–D67, A102–L108, T134–E137, F141, and R144.

The protein belongs to the IspF family. As to quaternary structure, homotrimer. A divalent metal cation is required as a cofactor.

It carries out the reaction 4-CDP-2-C-methyl-D-erythritol 2-phosphate = 2-C-methyl-D-erythritol 2,4-cyclic diphosphate + CMP. The protein operates within isoprenoid biosynthesis; isopentenyl diphosphate biosynthesis via DXP pathway; isopentenyl diphosphate from 1-deoxy-D-xylulose 5-phosphate: step 4/6. Involved in the biosynthesis of isopentenyl diphosphate (IPP) and dimethylallyl diphosphate (DMAPP), two major building blocks of isoprenoid compounds. Catalyzes the conversion of 4-diphosphocytidyl-2-C-methyl-D-erythritol 2-phosphate (CDP-ME2P) to 2-C-methyl-D-erythritol 2,4-cyclodiphosphate (ME-CPP) with a corresponding release of cytidine 5-monophosphate (CMP). This Shewanella amazonensis (strain ATCC BAA-1098 / SB2B) protein is 2-C-methyl-D-erythritol 2,4-cyclodiphosphate synthase.